Consider the following 224-residue polypeptide: UPF0319 protein VC_1853 (224 aa).

The first 21 residues, 1–21 (MKLNPLILGLLLSFSAGHSLA), serve as a signal peptide directing secretion.

This sequence belongs to the UPF0319 family.

This Vibrio cholerae serotype O1 (strain ATCC 39315 / El Tor Inaba N16961) protein is UPF0319 protein VC_1853.